We begin with the raw amino-acid sequence, 190 residues long: Transcription factor bHLH162 (190 aa).

Residues 1–12 (MEPSHSNTGQSR) show a composition bias toward polar residues. The interval 1 to 21 (MEPSHSNTGQSRSVDRKTVEK) is disordered. Positions 11-63 (SRSVDRKTVEKNRRMQMKSLYSELISLLPHHSSTEPLTLPDQLDEAANYIKKL) constitute a bHLH domain.

It belongs to the bHLH protein family.

It is found in the nucleus. The protein is Transcription factor bHLH162 of Arabidopsis thaliana (Mouse-ear cress).